We begin with the raw amino-acid sequence, 402 residues long: Propionate kinase (402 aa).

Residues asparagine 11 and lysine 18 each coordinate ATP. Mg(2+) is bound at residue asparagine 11. A substrate-binding site is contributed by arginine 86. Aspartate 143 acts as the Proton donor/acceptor in catalysis. ATP is bound by residues histidine 175, 203–207 (HLGNG), 278–280 (DLR), and 326–330 (GIGEN).

This sequence belongs to the acetokinase family. TdcD subfamily. As to quaternary structure, homodimer. Mg(2+) is required as a cofactor.

The enzyme catalyses propanoate + ATP = propanoyl phosphate + ADP. It functions in the pathway amino-acid degradation; L-threonine degradation via propanoate pathway; propanoate from L-threonine: step 4/4. Functionally, catalyzes the conversion of propionyl phosphate and ADP to propionate and ATP. The polypeptide is Propionate kinase (Edwardsiella piscicida).